A 729-amino-acid chain; its full sequence is Serine/threonine-protein kinase TBK1 (729 aa).

The Protein kinase domain maps to 9–310 (WLLSDILGQG…ETSDVLHRMV (302 aa)). Residue 15 to 23 (LGQGATANV) participates in ATP binding. A Glycyl lysine isopeptide (Lys-Gly) (interchain with G-Cter in ubiquitin) cross-link involves residue Lys30. Position 38 (Lys38) interacts with ATP. Catalysis depends on Asp135, which acts as the Proton acceptor. The residue at position 172 (Ser172) is a Phosphoserine; by autocatalysis and IKKB. The 77-residue stretch at 309–385 (MVIHVFSLQH…ENPIFVTSRE (77 aa)) folds into the Ubiquitin-like domain. Residue Lys401 forms a Glycyl lysine isopeptide (Lys-Gly) (interchain with G-Cter in ubiquitin) linkage. Coiled-coil stretches lie at residues 407–657 (DLDG…LQET) and 658–713 (LPQK…ILER). The tract at residues 621-729 (RKMLHLRKQL…DGGLRNVDCL (109 aa)) is interaction with AZI2, TANK and TBKBP1. Lys670 participates in a covalent cross-link: Glycyl lysine isopeptide (Lys-Gly) (interchain with G-Cter in ubiquitin). At Ser716 the chain carries Phosphoserine.

It belongs to the protein kinase superfamily. Ser/Thr protein kinase family. I-kappa-B kinase subfamily. In terms of assembly, homodimer. Interacts with DDX3X, TIRAP and TRAF2. Part of a ternary complex consisting of TANK, TRAF2 and TBK1. Interacts with AZI2, TANK and TBKBP1; these interactions are mutually exclusive and mediate TBK1 activation. Interacts with GSK3B; this interaction promotes TBK1 self-association and autophosphorylation. Interacts with SIKE1; SIKE1 is associated with TBK1 under physiological condition and dissociated from TBK1 upon viral infection or TLR3 stimulation. Interacts with IRF3, leading to IRF3 phosphorylation. Interacts with RIGI. Interacts with CYLD. Interacts with OPTN and TRAF3. Interacts with SRC. Interacts with the exocyst complex subunit SEC5/EXOC2; this interaction is sufficient to trigger TBK1 activity. Interacts with STING1, leading to STING1 phosphorylation. Interacts with IFIT3 (via N-terminus). Interacts with MAVS; interaction only takes place in the presence of IFIT3 and leads to MAVS phosphorylation. Interacts (via protein kinase domain) with TTLL12 (via TTL domain); the interaction prevents MAVS binding to TBK1. Interacts with TICAM1; this interaction is enhanced in the presence of WDFY1 and leads to TICAM1 phosphorylation. Interacts with TRIM26. Interacts with TRIM23. Interacts with TTC4 and IKBKE. Interacts with HNRNPA2B1. Interacts with DDX3X. Interacts with TRIM14. Interacts with CEP170; efficient complex formation may be dependent on the presence of CCDC61. Interacts with TRAF3IP3. Interacts with HSP90AA1; the interaction mediates TBK1 association with TOMM70. Interacts with TAX1BP1. Interacts with kinase IKBKB; the complex interacts with STAT1, leading to phosphorylation of STAT1 on 'Thr-748' by IKBKB. Interacts with ICOS; this interaction is critical for the maturation of T follicular regulatory cells. Interacts with RNF144B; this interaction prevents TBK1 phosphorylation and subsequent activation. Interacts with ASB8; this interaction promotes TBK1 proteasomal degradation. In terms of processing, autophosphorylation at Ser-172 activates the kinase, and is an essential step for virus-triggered signaling. Phosphorylated by IKBKB/IKKB at Ser-172. Phosphorylation requires homodimerization and ubiquitination at Lys-30 and Lys-401. Dephosphorylated at Ser-172 by PPM1B and this negatively regulates its role in mediating antiviral response. Post-translationally, 'Lys-63'-linked polyubiquitination by MIB1 after RNA virus infection, or by NRDP1 after LPS stimulation at Lys-30 and Lys-401, participates in kinase activation. 'Lys-48'-linked polyubiquitination at Lys-670 by DTX4 leads to proteasomal degradation. 'Lys-48'-linked polyubiquitination by TRAIP also leads to proteasomal degradation. 'Lys-48'-linked polyubiquitination by TRAF7; leading to proteasomal degradation. 'Lys-63'-linked polyubiquitination by RNF128 at Lys-30 and Lys-401 leads to the activation of antiviral responses. 'Lys-48'-linked polyubiquitination after 'lys-33'-linked deubiquitination by USP38 promotes TBK1 degradation.

It localises to the cytoplasm. It catalyses the reaction L-seryl-[protein] + ATP = O-phospho-L-seryl-[protein] + ADP + H(+). It carries out the reaction L-threonyl-[protein] + ATP = O-phospho-L-threonyl-[protein] + ADP + H(+). With respect to regulation, kinase activity is inhibited competitively by amlexanox. Its function is as follows. Serine/threonine kinase that plays an essential role in regulating inflammatory responses to foreign agents. Following activation of toll-like receptors by viral or bacterial components, associates with TRAF3 and TANK and phosphorylates interferon regulatory factors (IRFs) IRF3 and IRF7 as well as DDX3X. This activity allows subsequent homodimerization and nuclear translocation of the IRFs leading to transcriptional activation of pro-inflammatory and antiviral genes including IFNA and IFNB. In order to establish such an antiviral state, TBK1 form several different complexes whose composition depends on the type of cell and cellular stimuli. Thus, several scaffolding molecules including FADD, TRADD, MAVS, AZI2, TANK or TBKBP1/SINTBAD can be recruited to the TBK1-containing-complexes. Plays a key role in IRF3 activation: acts by first phosphorylating innate adapter proteins MAVS, STING1 and TICAM1 on their pLxIS motif, leading to recruitment of IRF3, thereby licensing IRF3 for phosphorylation by TBK1. Under particular conditions, functions as a NF-kappa-B effector by phosphorylating NF-kappa-B inhibitor alpha/NFKBIA, IKBKB or RELA to translocate NF-Kappa-B to the nucleus. Restricts bacterial proliferation by phosphorylating the autophagy receptor OPTN/Optineurin on 'Ser-177', thus enhancing LC3 binding affinity and antibacterial autophagy. Phosphorylates SMCR8 component of the C9orf72-SMCR8 complex, promoting autophagosome maturation. Phosphorylates ATG8 proteins MAP1LC3C and GABARAPL2, thereby preventing their delipidation and premature removal from nascent autophagosomes. Seems to play a role in energy balance regulation by sustaining a state of chronic, low-grade inflammation in obesity, which leads to a negative impact on insulin sensitivity. Acts both as a positive and negative regulator of the mTORC1 complex, depending on the context: activates mTORC1 in response to growth factors by catalyzing phosphorylation of MTOR, while it limits the mTORC1 complex by promoting phosphorylation of RPTOR. Acts as a positive regulator of the mTORC2 complex by mediating phosphorylation of MTOR, leading to increased phosphorylation and activation of AKT1. Phosphorylates and activates AKT1. Involved in the regulation of TNF-induced RIPK1-mediated cell death, probably acting via CYLD phosphorylation that in turn controls RIPK1 ubiquitination status. Also participates in the differentiation of T follicular regulatory cells together with the receptor ICOS. This is Serine/threonine-protein kinase TBK1 from Mus musculus (Mouse).